The sequence spans 288 residues: Fructose-bisphosphate aldolase (288 aa).

Residue serine 49 participates in D-glyceraldehyde 3-phosphate binding. Aspartate 84 (proton donor) is an active-site residue. Residues histidine 85, aspartate 105, glutamate 135, and histidine 177 each contribute to the Zn(2+) site. Glycine 178 lines the dihydroxyacetone phosphate pocket. Histidine 206 contributes to the Zn(2+) binding site. Dihydroxyacetone phosphate-binding positions include 207-209 (GGS) and 228-231 (NINT).

This sequence belongs to the class II fructose-bisphosphate aldolase family. As to quaternary structure, homodimer. Zn(2+) is required as a cofactor.

It catalyses the reaction beta-D-fructose 1,6-bisphosphate = D-glyceraldehyde 3-phosphate + dihydroxyacetone phosphate. It functions in the pathway carbohydrate degradation; glycolysis; D-glyceraldehyde 3-phosphate and glycerone phosphate from D-glucose: step 4/4. Catalyzes the aldol condensation of dihydroxyacetone phosphate (DHAP or glycerone-phosphate) with glyceraldehyde 3-phosphate (G3P) to form fructose 1,6-bisphosphate (FBP) in gluconeogenesis and the reverse reaction in glycolysis. This Mycoplasma pneumoniae (strain ATCC 29342 / M129 / Subtype 1) (Mycoplasmoides pneumoniae) protein is Fructose-bisphosphate aldolase (fba).